The primary structure comprises 180 residues: Pyruvate synthase subunit PorC (180 aa).

Heterotetramer of one alpha, one beta, one delta and one gamma chain.

The enzyme catalyses 2 oxidized [2Fe-2S]-[ferredoxin] + pyruvate + CoA = 2 reduced [2Fe-2S]-[ferredoxin] + acetyl-CoA + CO2 + H(+). The sequence is that of Pyruvate synthase subunit PorC (porC) from Methanothermobacter thermautotrophicus (strain ATCC 29096 / DSM 1053 / JCM 10044 / NBRC 100330 / Delta H) (Methanobacterium thermoautotrophicum).